The sequence spans 208 residues: Small ribosomal subunit protein uS5 (208 aa).

An S5 DRBM domain is found at leucine 48–isoleucine 111.

This sequence belongs to the universal ribosomal protein uS5 family. Part of the 30S ribosomal subunit. Contacts protein S4.

Its function is as follows. With S4 and S12 plays an important role in translational accuracy. This chain is Small ribosomal subunit protein uS5, found in Methanosarcina barkeri (strain Fusaro / DSM 804).